Here is a 133-residue protein sequence, read N- to C-terminus: Small ribosomal subunit protein uS8 (133 aa).

It belongs to the universal ribosomal protein uS8 family. Part of the 30S ribosomal subunit. Contacts proteins S5 and S12.

In terms of biological role, one of the primary rRNA binding proteins, it binds directly to 16S rRNA central domain where it helps coordinate assembly of the platform of the 30S subunit. This chain is Small ribosomal subunit protein uS8, found in Synechococcus sp. (strain RCC307).